The sequence spans 229 residues: Coiled-coil domain-containing protein 134 (229 aa).

The N-terminal stretch at 1–22 (MDLLQFLAFLFVLLLSGMGATG) is a signal peptide. N148 is a short sequence motif (prevents secretion from ER). Residue N148 is glycosylated (N-linked (GlcNAc...) asparagine). Residues 193 to 229 (TDPFQKALREEEKRRKKEEKRKEIRKGPRISRSQSEL) form a disordered region. The stretch at 196–218 (FQKALREEEKRRKKEEKRKEIRK) forms a coiled coil. A Nuclear localization signal motif is present at residues 206–213 (RRKKEEKR).

This sequence belongs to the CCDC134 family. In terms of assembly, interacts with TADA2A. Associates with the PCAF complex via TADA2A binding. Post-translationally, O-glycosylated, with additional sialic acid modifications. Expressed in cervical gland, cervical squamous epithelium, endometrium, stomach, kidney distal convoluted tubule, spermatogenic cells in testis, mammary gland, liver and striated muscle (at protein level). Also detected in placenta. Highest expression in testis relative to other tissues. Detected in T cells and dendritic cells; highly expressed in activated CD8(+) T cells, and also expressed at lower levels in CD4(+) T cells.

The protein resides in the endoplasmic reticulum lumen. It localises to the secreted. Its subcellular location is the cytoplasm. It is found in the nucleus. Functionally, molecular adapter required to prevent protein hyperglycosylation of HSP90B1: during translation, associates with nascent HSP90B1 and the STT3A catalytic component of the OST-A complex and tethers them to a specialized translocon that forms a microenvironment for HSP90B1 folding. In the CCDC134-containing translocon, STT3A associates with the SRT pseudosubstrate motif of HSP90B1, preventing access to facultative glycosylation sites until folding is completed, preventing hyperglycosylation and subsequent degradation of HSP90B1. In extracellular secreted form, promotes proliferation and activation of CD8(+) T-cells, suggesting a cytokine-like function. May inhibit ERK and JNK signaling activity. May suppress cell migration and invasion activity, via its effects on ERK and JNK signaling. May also localize in the nucleus: enhances stability of the PCAF histone acetyltransferase (HAT) complex member TADA2A and thus promotes PCAF-mediated histone acetyltransferase activity. Has a critical role in the regulation of osteogenesis and bone development. The polypeptide is Coiled-coil domain-containing protein 134 (Homo sapiens (Human)).